The chain runs to 196 residues: Heat shock protein beta-8 (196 aa).

A disordered region spans residues 1–35 (MADGQMPFSCHYPSRLRRDPFRDSPLPSRLLDDDF). Phosphoserine occurs at positions 24 and 57. Position 63 is a phosphothreonine (threonine 63). Arginine 71 and arginine 78 each carry asymmetric dimethylarginine. The 112-residue stretch at 74–185 (TAAARFGVPA…PFGESNFNNE (112 aa)) folds into the sHSP domain. Serine 87 bears the Phosphoserine mark. The interval 176-196 (PFGESNFNNELPQDSQEVTCT) is disordered. Residues 178 to 196 (GESNFNNELPQDSQEVTCT) are compositionally biased toward polar residues.

The protein belongs to the small heat shock protein (HSP20) family. In terms of assembly, monomer. Forms a ternary complex with BAG3 and HSPA1A. Component of the chaperone-assisted selective autophagy (CASA) complex consisting of BAG3, HSPA8/HSC70, HSPB8 and STUB1/CHIP. Interacts with HSPB1. Interacts with DNAJB6. Interacts with BAG3. In terms of processing, phosphorylated.

Its subcellular location is the cytoplasm. It localises to the nucleus. In terms of biological role, involved in the chaperone-assisted selective autophagy (CASA), a crucial process for protein quality control, particularly in mechanical strained cells and tissues such as muscle. Displays temperature-dependent chaperone activity. This is Heat shock protein beta-8 (HSPB8) from Canis lupus familiaris (Dog).